Here is a 572-residue protein sequence, read N- to C-terminus: Laccase-3 (572 aa).

The first 18 residues, 1-18, serve as a signal peptide directing secretion; it reads MARTTFLVSVSLFVSAVL. Plastocyanin-like domains lie at 21–145 and 157–304; these read TVEY…LVIY and IDDE…LIYE. Cu cation is bound by residues His-82, His-84, His-127, and His-129. A disulfide bridge connects residues Cys-103 and Cys-561. Asn-182, Asn-228, Asn-294, Asn-367, and Asn-405 each carry an N-linked (GlcNAc...) asparagine glycan. The Plastocyanin-like 3 domain maps to 422–540; it reads DMPTLLKILT…EGFAMVFAEA (119 aa). 7 residues coordinate Cu cation: His-470, His-473, His-475, His-522, Cys-523, His-524, and His-528.

The protein belongs to the multicopper oxidase family. Homodimer. Cu cation is required as a cofactor. In mycelia, at a lower level than LCC4.

Its subcellular location is the secreted. The catalysed reaction is 4 hydroquinone + O2 = 4 benzosemiquinone + 2 H2O. Lignin degradation and detoxification of lignin-derived products. The sequence is that of Laccase-3 (LCC3) from Thanatephorus cucumeris (Black scurf of potato).